The sequence spans 88 residues: Small ribosomal subunit protein bS20 (88 aa).

This sequence belongs to the bacterial ribosomal protein bS20 family.

Binds directly to 16S ribosomal RNA. This is Small ribosomal subunit protein bS20 from Methylocella silvestris (strain DSM 15510 / CIP 108128 / LMG 27833 / NCIMB 13906 / BL2).